Consider the following 125-residue polypeptide: Mini-ribonuclease 3 (125 aa).

Asp11 is an active-site residue.

Belongs to the MrnC RNase family. As to quaternary structure, homodimer. Mg(2+) is required as a cofactor.

It localises to the cytoplasm. Involved in correct processing of both the 5' and 3' ends of 23S rRNA precursor. Processes 30S rRNA precursor transcript even in absence of ribonuclease 3 (Rnc); Rnc processes 30S rRNA into smaller rRNA precursors. This Acholeplasma laidlawii (strain PG-8A) protein is Mini-ribonuclease 3.